Consider the following 207-residue polypeptide: Ribonuclease HII (207 aa).

In terms of domain architecture, RNase H type-2 spans 20–207 (QLFAGVDEVG…KPVKRVLGIE (188 aa)). Positions 26, 27, and 118 each coordinate a divalent metal cation.

This sequence belongs to the RNase HII family. It depends on Mn(2+) as a cofactor. Mg(2+) serves as cofactor.

It is found in the cytoplasm. It catalyses the reaction Endonucleolytic cleavage to 5'-phosphomonoester.. In terms of biological role, endonuclease that specifically degrades the RNA of RNA-DNA hybrids. This is Ribonuclease HII from Aliivibrio salmonicida (strain LFI1238) (Vibrio salmonicida (strain LFI1238)).